The primary structure comprises 99 residues: Large ribosomal subunit protein bL21 (99 aa).

The protein belongs to the bacterial ribosomal protein bL21 family. As to quaternary structure, part of the 50S ribosomal subunit. Contacts protein L20.

Its function is as follows. This protein binds to 23S rRNA in the presence of protein L20. In Acholeplasma laidlawii (strain PG-8A), this protein is Large ribosomal subunit protein bL21.